The chain runs to 1123 residues: Leucine--tRNA ligase, cytoplasmic (1123 aa).

The short motif at 84–94 is the 'HIGH' region element; that stretch reads PYMNGRLHAGH. Residues 757-761 carry the 'KMSKS' region motif; it reads KMSKS. Lys760 serves as a coordination point for ATP.

It belongs to the class-I aminoacyl-tRNA synthetase family.

It is found in the cytoplasm. The catalysed reaction is tRNA(Leu) + L-leucine + ATP = L-leucyl-tRNA(Leu) + AMP + diphosphate. The polypeptide is Leucine--tRNA ligase, cytoplasmic (leu-6) (Neurospora crassa (strain ATCC 24698 / 74-OR23-1A / CBS 708.71 / DSM 1257 / FGSC 987)).